A 462-amino-acid chain; its full sequence is Argininosuccinate lyase (462 aa).

The protein belongs to the lyase 1 family. Argininosuccinate lyase subfamily.

Its subcellular location is the cytoplasm. It catalyses the reaction 2-(N(omega)-L-arginino)succinate = fumarate + L-arginine. It participates in amino-acid biosynthesis; L-arginine biosynthesis; L-arginine from L-ornithine and carbamoyl phosphate: step 3/3. This chain is Argininosuccinate lyase, found in Gloeothece citriformis (strain PCC 7424) (Cyanothece sp. (strain PCC 7424)).